The following is a 446-amino-acid chain: N-succinylarginine dihydrolase (446 aa).

Substrate is bound by residues 19–28, N110, and 137–138; these read SGLSYGNVAS and HR. E174 is an active-site residue. R214 lines the substrate pocket. Residue H250 is part of the active site. 2 residues coordinate substrate: D252 and N363. C369 functions as the Nucleophile in the catalytic mechanism.

Belongs to the succinylarginine dihydrolase family. As to quaternary structure, homodimer.

It carries out the reaction N(2)-succinyl-L-arginine + 2 H2O + 2 H(+) = N(2)-succinyl-L-ornithine + 2 NH4(+) + CO2. It participates in amino-acid degradation; L-arginine degradation via AST pathway; L-glutamate and succinate from L-arginine: step 2/5. In terms of biological role, catalyzes the hydrolysis of N(2)-succinylarginine into N(2)-succinylornithine, ammonia and CO(2). The sequence is that of N-succinylarginine dihydrolase from Hahella chejuensis (strain KCTC 2396).